We begin with the raw amino-acid sequence, 242 residues long: ATP synthase subunit a (242 aa).

5 helical membrane-spanning segments follow: residues 28–48, 89–109, 128–148, 193–213, and 214–234; these read LHGQ…LLVV, LPFV…GALI, INTT…AGLS, LVVA…AMFL, and GLFT…NYIG.

Belongs to the ATPase A chain family. F-type ATPases have 2 components, CF(1) - the catalytic core - and CF(0) - the membrane proton channel. CF(1) has five subunits: alpha(3), beta(3), gamma(1), delta(1), epsilon(1). CF(0) has four main subunits: a, b, b' and c.

The protein localises to the cellular thylakoid membrane. Its function is as follows. Key component of the proton channel; it plays a direct role in the translocation of protons across the membrane. This Synechococcus sp. (strain WH7803) protein is ATP synthase subunit a.